The primary structure comprises 942 residues: Chitin synthase 4 (942 aa).

Residues 1–124 (MPPRYPFGGG…FDEHDGDVPL (124 aa)) are disordered. Positions 14 to 26 (DEAHHQPLERRTT) are enriched in basic and acidic residues. Polar residues predominate over residues 27–36 (AEAQGNSFTH). N-linked (GlcNAc...) asparagine glycosylation is present at asparagine 604. 7 helical membrane passes run 641–661 (TIQL…FFIL), 674–694 (VPNL…FLLS), 709–729 (AMVV…YLAV), 755–775 (IVIS…MFLE), 783–803 (IVQY…YAFA), 885–905 (VLCW…ISSI), and 909–929 (TIYM…RMMG).

Belongs to the chitin synthase family. Class I subfamily.

The protein localises to the cell membrane. It localises to the cytoplasmic vesicle membrane. It catalyses the reaction [(1-&gt;4)-N-acetyl-beta-D-glucosaminyl](n) + UDP-N-acetyl-alpha-D-glucosamine = [(1-&gt;4)-N-acetyl-beta-D-glucosaminyl](n+1) + UDP + H(+). Functionally, polymerizes chitin, a structural polymer of the cell wall and septum, by transferring the sugar moiety of UDP-GlcNAc to the non-reducing end of the growing chitin polymer. This Mycosarcoma maydis (Corn smut fungus) protein is Chitin synthase 4.